Here is a 121-residue protein sequence, read N- to C-terminus: Small ribosomal subunit protein uS13 (121 aa).

The interval 94 to 121 (GLPVRGQRTRTNSRTRKGPKKGAAALKK) is disordered.

This sequence belongs to the universal ribosomal protein uS13 family. In terms of assembly, part of the 30S ribosomal subunit. Forms a loose heterodimer with protein S19. Forms two bridges to the 50S subunit in the 70S ribosome.

Located at the top of the head of the 30S subunit, it contacts several helices of the 16S rRNA. In the 70S ribosome it contacts the 23S rRNA (bridge B1a) and protein L5 of the 50S subunit (bridge B1b), connecting the 2 subunits; these bridges are implicated in subunit movement. Contacts the tRNAs in the A and P-sites. In Leptothrix cholodnii (strain ATCC 51168 / LMG 8142 / SP-6) (Leptothrix discophora (strain SP-6)), this protein is Small ribosomal subunit protein uS13.